A 90-amino-acid polypeptide reads, in one-letter code: Barstar (90 aa).

This sequence belongs to the barstar family.

The protein resides in the cytoplasm. Its function is as follows. Inhibitor of the ribonuclease barnase. Forms a one-to-one non-covalent complex. This Bacillus amyloliquefaciens (Bacillus velezensis) protein is Barstar.